Consider the following 346-residue polypeptide: UDP-N-acetylenolpyruvoylglucosamine reductase (346 aa).

An FAD-binding PCMH-type domain is found at 17 to 187 (IESQAYALIE…VAVGFTLKKE (171 aa)). Arg-163 is an active-site residue. Ser-233 (proton donor) is an active-site residue. The active site involves Glu-329.

Belongs to the MurB family. It depends on FAD as a cofactor.

Its subcellular location is the cytoplasm. The catalysed reaction is UDP-N-acetyl-alpha-D-muramate + NADP(+) = UDP-N-acetyl-3-O-(1-carboxyvinyl)-alpha-D-glucosamine + NADPH + H(+). It functions in the pathway cell wall biogenesis; peptidoglycan biosynthesis. Cell wall formation. The chain is UDP-N-acetylenolpyruvoylglucosamine reductase from Photobacterium profundum (strain SS9).